The following is a 663-amino-acid chain: Sodium/potassium/calcium exchanger 1 (663 aa).

Topologically, residues 32–128 (SPSAIPALLT…DLFSVEERRQ (97 aa)) are extracellular. Residues Asn59, Asn66, and Asn100 are each glycosylated (N-linked (GlcNAc...) asparagine). Residues 129 to 149 (GWVVLHIFGMMYVFVALAIVC) traverse the membrane as a helical segment. Residues 150–173 (DEYFVPALGVITEKLQISEDVAGA) lie on the Cytoplasmic side of the membrane. The Alpha-1 repeat unit spans residues 170-210 (VAGATFMAAGGSAPELFTSLIGVFISHSNVGIGTIVGSAVF). A helical membrane pass occupies residues 174-194 (TFMAAGGSAPELFTSLIGVFI). Residues 195 to 200 (SHSNVG) are Extracellular-facing. A helical membrane pass occupies residues 201 to 221 (IGTIVGSAVFNILFVIGTCAL). Topologically, residues 222 to 228 (FSREILH) are cytoplasmic. The chain crosses the membrane as a helical span at residues 229–253 (LTWWPLFRDISFYIVDLLMLILFFL). At 254 to 259 (DSVIDW) the chain is on the extracellular side. A helical membrane pass occupies residues 260–276 (WESLLLLTAYATYVFTM). The Cytoplasmic segment spans residues 277 to 471 (KHNVSLEQWV…SLEWPETRKK (195 aa)). 2 disordered regions span residues 308 to 343 (KSSV…SLHN) and 384 to 465 (LTGQ…SLEW). Over residues 316-325 (DGTKPADGKK) the composition is skewed to basic and acidic residues. Polar residues-rich tracts occupy residues 327-343 (QPTT…SLHN) and 399-412 (ASQN…ASDS). Ser337 carries the post-translational modification Phosphoserine. The segment covering 413 to 423 (EPSKDKQKEDT) has biased composition (basic and acidic residues). A compositionally biased stretch (acidic residues) spans 434-461 (DNSEDSSSDSEDDSDDDSTDDEENDEPL). The helical transmembrane segment at 472-492 (QAIYLFLFPIVFPLWSTIPDV) threads the bilayer. The Extracellular portion of the chain corresponds to 493-499 (RNPDSKK). A helical transmembrane segment spans residues 500 to 520 (FFVITFFGSIIWIAAFSYLMV). Residues 521–535 (WWAHQVGETIGISEE) lie on the Cytoplasmic side of the membrane. Residues 536-556 (IMGLTILAAGTSIPDLITSVI) form a helical membrane-spanning segment. One copy of the Alpha-2 repeat lies at 543 to 574 (AAGTSIPDLITSVIVARKGLGDMAVSSSVGSN). Residues 557–574 (VARKGLGDMAVSSSVGSN) are Extracellular-facing. A helical membrane pass occupies residues 575 to 595 (IFDITVGLPVPWFLYSVFNGF). At 596–604 (SPVAVSSNG) the chain is on the cytoplasmic side. Residues 605 to 625 (LFCAIVLLFLMLLFVIISIAL) traverse the membrane as a helical segment. The Extracellular segment spans residues 626–632 (CKWKMNK). A helical membrane pass occupies residues 633-653 (ILGVTMFALYFVFLIISVMLE). The Cytoplasmic portion of the chain corresponds to 654-663 (DRIISCPVSV).

This sequence belongs to the Ca(2+):cation antiporter (CaCA) (TC 2.A.19) family. SLC24A subfamily. The uncleaved signal sequence is required for efficient membrane targeting and proper membrane integration and topology. Retinal rods. Localizes to the inner segment of rod photoreceptors.

The protein resides in the cell membrane. It catalyses the reaction Ca(2+)(out) + K(+)(out) + 4 Na(+)(in) = Ca(2+)(in) + K(+)(in) + 4 Na(+)(out). Its function is as follows. Calcium, potassium:sodium antiporter that transports 1 Ca(2+) and 1 K(+) in exchange for 4 Na(+). Critical component of the visual transduction cascade, controlling the calcium concentration of outer segments during light and darkness. Light causes a rapid lowering of cytosolic free calcium in the outer segment of both retinal rod and cone photoreceptors and the light-induced lowering of calcium is caused by extrusion via this protein which plays a key role in the process of light adaptation. This is Sodium/potassium/calcium exchanger 1 (SLC24A1) from Gallus gallus (Chicken).